The sequence spans 355 residues: Countin-like protein (355 aa).

Residues 1 to 27 (MNKSLFSLILLIITIFNLASNINIVSA) form the signal peptide. The tract at residues 63–83 (NNHEDNNNNNNNNNNNNNAYN) is disordered. Low complexity predominate over residues 69–83 (NNNNNNNNNNNNAYN). The region spanning 93–177 (GDIECVVCLD…ELITACSTPK (85 aa)) is the Saposin B-type domain. 3 disulfides stabilise this stretch: C97–C173, C100–C167, and C128–C140. N132, N209, N242, N253, N254, N282, and N303 each carry an N-linked (GlcNAc...) asparagine glycan. The segment at 290-355 (ISNPTPTPTP…SSHYKNKINK (66 aa)) is disordered. Residues 301–342 (PSNSTTPTPTPTNSTPTPTSTSTPTSTPTSTPTPTPTSSSST) show a composition bias toward low complexity. Basic residues predominate over residues 345–355 (HSSHYKNKINK).

This sequence belongs to the countin family.

The protein localises to the secreted. The polypeptide is Countin-like protein (Dictyostelium discoideum (Social amoeba)).